The chain runs to 173 residues: Mitochondrial holo-[acyl-carrier-protein] synthase (173 aa).

Belongs to the P-Pant transferase superfamily. AcpS family.

Its subcellular location is the mitochondrion. The catalysed reaction is apo-[ACP] + CoA = holo-[ACP] + adenosine 3',5'-bisphosphate + H(+). Functionally, transfers the 4'-phosphopantetheine moiety from coenzyme A to a Ser of mitochondrial acyl-carrier-protein. The polypeptide is Mitochondrial holo-[acyl-carrier-protein] synthase (PPT2) (Saccharomyces cerevisiae (strain ATCC 204508 / S288c) (Baker's yeast)).